A 266-amino-acid chain; its full sequence is 3-deoxy-manno-octulosonate cytidylyltransferase 1 (266 aa).

Belongs to the KdsB family.

It localises to the cytoplasm. It catalyses the reaction 3-deoxy-alpha-D-manno-oct-2-ulosonate + CTP = CMP-3-deoxy-beta-D-manno-octulosonate + diphosphate. Its pathway is nucleotide-sugar biosynthesis; CMP-3-deoxy-D-manno-octulosonate biosynthesis; CMP-3-deoxy-D-manno-octulosonate from 3-deoxy-D-manno-octulosonate and CTP: step 1/1. The protein operates within bacterial outer membrane biogenesis; lipopolysaccharide biosynthesis. In terms of biological role, activates KDO (a required 8-carbon sugar) for incorporation into bacterial lipopolysaccharide in Gram-negative bacteria. This is 3-deoxy-manno-octulosonate cytidylyltransferase 1 from Paraburkholderia phytofirmans (strain DSM 17436 / LMG 22146 / PsJN) (Burkholderia phytofirmans).